Reading from the N-terminus, the 148-residue chain is Vascular endothelial growth factor homolog (148 aa).

Positions 1-25 (MKLTATLQVVVALLICMYNLPECVS) are cleaved as a signal peptide. 3 disulfides stabilise this stretch: Cys-46-Cys-88, Cys-77-Cys-130, and Cys-81-Cys-132. A glycan (N-linked (GlcNAc...) asparagine; by host) is linked at Asn-95.

This sequence belongs to the PDGF/VEGF growth factor family. Homodimer; disulfide-linked.

It localises to the secreted. Its function is as follows. Induces endothelial proliferation. The sequence is that of Vascular endothelial growth factor homolog from Orf virus (strain NZ7) (OV NZ-7).